We begin with the raw amino-acid sequence, 135 residues long: Dihydromethanopterin reductase (135 aa).

Residues Ala9, 16-21 (LGLNGH), 52-54 (PKT), and 93-97 (GGIAV) each bind NADP(+).

In terms of assembly, homodimer.

The enzyme catalyses 5,6,7,8-tetrahydromethanopterin + NAD(+) = 7,8-dihydromethanopterin + NADH + H(+). The catalysed reaction is 5,6,7,8-tetrahydromethanopterin + NADP(+) = 7,8-dihydromethanopterin + NADPH + H(+). Its pathway is cofactor biosynthesis; 5,6,7,8-tetrahydromethanopterin biosynthesis. Its function is as follows. Catalyzes the reduction of dihydromethanopterin (H(2)MPT) to tetrahydromethanopterin (H(4)MPT). Shows preference for NADPH rather than NADH as electron donor. Does not reduce dihydrofolate. This Methylorubrum extorquens (strain ATCC 14718 / DSM 1338 / JCM 2805 / NCIMB 9133 / AM1) (Methylobacterium extorquens) protein is Dihydromethanopterin reductase (dmrA).